The primary structure comprises 483 residues: GDP-fucose protein O-fucosyltransferase 4 (483 aa).

Position 1 (methionine 1) is a topological domain, cytoplasmic. The helical; Signal-anchor for type II membrane protein transmembrane segment at 2 to 21 (ALCLWLFLVLPICCWCQGAV) threads the bilayer. At 22 to 483 (DLGDSGVFQP…RARGLSNDSR (462 aa)) the chain is on the lumenal side. N-linked (GlcNAc...) asparagine glycans are attached at residues asparagine 151 and asparagine 303. Cysteine 374 and cysteine 377 are disulfide-bonded. Residues 387–425 (RKAHRKNPKQNQPPQPKMANSSHMGCPLPSPGYGPVENV) form a disordered region. Asparagine 406, asparagine 428, asparagine 456, and asparagine 480 each carry an N-linked (GlcNAc...) asparagine glycan.

Belongs to the glycosyltransferase 10 family.

Its subcellular location is the endoplasmic reticulum membrane. The enzyme catalyses L-threonyl-[protein] + GDP-beta-L-fucose = 3-O-(alpha-L-fucosyl)-L-threonyl-[protein] + GDP + H(+). The catalysed reaction is L-seryl-[protein] + GDP-beta-L-fucose = 3-O-(alpha-L-fucosyl)-L-seryl-[protein] + GDP + H(+). The protein operates within protein modification; protein glycosylation. Protein O-fucosyltransferase that specifically catalyzes O-fucosylation of serine or threonine residues in EMI domains of target proteins. Attaches fucose through an O-glycosidic linkage. O-fucosylation of EMI domain-containing proteins may be required for facilitating protein folding and secretion. The chain is GDP-fucose protein O-fucosyltransferase 4 (fut11) from Danio rerio (Zebrafish).